A 463-amino-acid polypeptide reads, in one-letter code: Quinolone resistance protein NorB (463 aa).

The next 14 membrane-spanning stretches (helical) occupy residues 17–37, 53–73, 86–106, 107–127, 142–162, 165–185, 201–221, 230–250, 273–293, 299–319, 334–354, 357–377, 403–423, and 435–455; these read IGIVLSVITFWLFAQSLVNVV, IAVSITALFSGMFVVGAGGLA, IILNILGSLLIIISNIPLLLI, IGRLIQGLSAACIMPATLSII, YWSIGSWGGSGVCSFFGGAVA, LGWRWIFILSIIISLIALFLI, FDIKGLVLLVIMLLSLNILIT, SLLFITLLAIAIGSFSLFIVL, TASNFLLNGVAGTLIVANTFV, YSSLQAGSLSITYLVMVLIMI, PMLIGTGVLIVGECLISLTFL, IFYVICCIIGYLFFGLGLGIY, MASALGGAFGVALSGAVYAIV, and IALWLNAAMGILSFVIILLLV.

The protein belongs to the major facilitator superfamily. TCR/Tet family.

It localises to the cell membrane. Multidrug efflux pump that acts independently of NorA and is one of the factors that confers resistance against diverse quinolones and chemical compounds. The chain is Quinolone resistance protein NorB (norB) from Staphylococcus aureus (strain COL).